Here is a 347-residue protein sequence, read N- to C-terminus: NADH-ubiquinone oxidoreductase chain 2 (347 aa).

11 helical membrane passes run proline 3 to serine 23, histidine 25 to methionine 45, alanine 66 to valine 86, methionine 96 to proline 116, isoleucine 122 to leucine 142, isoleucine 145 to glycine 165, isoleucine 178 to proline 198, methionine 200 to methionine 220, methionine 237 to leucine 257, asparagine 274 to methionine 294, and leucine 325 to isoleucine 345.

This sequence belongs to the complex I subunit 2 family. As to quaternary structure, core subunit of respiratory chain NADH dehydrogenase (Complex I) which is composed of 45 different subunits. Interacts with TMEM242.

It is found in the mitochondrion inner membrane. The catalysed reaction is a ubiquinone + NADH + 5 H(+)(in) = a ubiquinol + NAD(+) + 4 H(+)(out). In terms of biological role, core subunit of the mitochondrial membrane respiratory chain NADH dehydrogenase (Complex I) which catalyzes electron transfer from NADH through the respiratory chain, using ubiquinone as an electron acceptor. Essential for the catalytic activity and assembly of complex I. The sequence is that of NADH-ubiquinone oxidoreductase chain 2 from Capra hircus (Goat).